A 295-amino-acid chain; its full sequence is Polyprenyl transferase dpmaC (295 aa).

8 helical membrane passes run 39–59 (LFCV…NDWI), 84–104 (QAFV…HVML), 109–124 (VHVI…YPFL), 131–151 (KLHI…AIPG), 168–188 (YCLP…TAYS), 213–233 (LVLV…LTQF), 237–257 (WLWV…LALF), and 271–291 (SNFV…LLKA).

The protein belongs to the UbiA prenyltransferase family. Mg(2+) is required as a cofactor.

Its subcellular location is the membrane. It participates in secondary metabolite biosynthesis; terpenoid biosynthesis. In terms of biological role, polyprenyl transferase; part of the gene cluster that mediates the biosynthesis of the diterpenoid pyrones subglutinols A and B. The first step of the pathway is the synthesis of the alpha-pyrone moiety by the polyketide synthase dpmaA via condensation of one acetyl-CoA starter unit with 3 malonyl-CoA units and 2 methylations. The alpha-pyrone is then combined with geranylgeranyl pyrophosphate (GGPP) formed by the GGPP synthase dpmaD through the action of the prenyltransferase dpmaC to yield a linear alpha-pyrone diterpenoid. Subsequent steps in the diterpenoid pyrone biosynthetic pathway involve the decalin core formation, which is initiated by the epoxidation of the C10-C11 olefin by the FAD-dependent oxidoreductase dpmaE, and is followed by a cyclization cascade catalyzed by the terpene cyclase dpmaB. The dehydrogenase dpmaF is then involved in tetrahydrofuran (THF) ring formation at the C5 unit to complete the formation of subglutinols A and B. The chain is Polyprenyl transferase dpmaC from Metarhizium anisopliae (Entomophthora anisopliae).